A 391-amino-acid chain; its full sequence is Alanine racemase (391 aa).

Catalysis depends on Lys-46, which acts as the Proton acceptor; specific for D-alanine. An N6-(pyridoxal phosphate)lysine modification is found at Lys-46. Residue Arg-148 participates in substrate binding. The active-site Proton acceptor; specific for L-alanine is the Tyr-283. Met-331 is a binding site for substrate.

Belongs to the alanine racemase family. The cofactor is pyridoxal 5'-phosphate.

The enzyme catalyses L-alanine = D-alanine. The protein operates within amino-acid biosynthesis; D-alanine biosynthesis; D-alanine from L-alanine: step 1/1. In terms of biological role, catalyzes the interconversion of L-alanine and D-alanine. May also act on other amino acids. The chain is Alanine racemase (alr) from Streptomyces coelicolor (strain ATCC BAA-471 / A3(2) / M145).